The sequence spans 693 residues: Elongation factor G (693 aa).

The region spanning 8 to 282 is the tr-type G domain; that stretch reads EKTRNIGIMA…AVVDYLPSPL (275 aa). GTP-binding positions include 17-24, 81-85, and 135-138; these read AHVDAGKT, DTPGH, and NKMD.

This sequence belongs to the TRAFAC class translation factor GTPase superfamily. Classic translation factor GTPase family. EF-G/EF-2 subfamily.

The protein localises to the cytoplasm. Its function is as follows. Catalyzes the GTP-dependent ribosomal translocation step during translation elongation. During this step, the ribosome changes from the pre-translocational (PRE) to the post-translocational (POST) state as the newly formed A-site-bound peptidyl-tRNA and P-site-bound deacylated tRNA move to the P and E sites, respectively. Catalyzes the coordinated movement of the two tRNA molecules, the mRNA and conformational changes in the ribosome. The sequence is that of Elongation factor G from Streptococcus mutans serotype c (strain ATCC 700610 / UA159).